The primary structure comprises 289 residues: tRNA-cytidine(32) 2-sulfurtransferase (289 aa).

The PP-loop motif motif lies at Ser39–Ser44. [4Fe-4S] cluster-binding residues include Cys114, Cys117, and Cys205.

It belongs to the TtcA family. In terms of assembly, homodimer. Mg(2+) serves as cofactor. The cofactor is [4Fe-4S] cluster.

Its subcellular location is the cytoplasm. It catalyses the reaction cytidine(32) in tRNA + S-sulfanyl-L-cysteinyl-[cysteine desulfurase] + AH2 + ATP = 2-thiocytidine(32) in tRNA + L-cysteinyl-[cysteine desulfurase] + A + AMP + diphosphate + H(+). It participates in tRNA modification. Functionally, catalyzes the ATP-dependent 2-thiolation of cytidine in position 32 of tRNA, to form 2-thiocytidine (s(2)C32). The sulfur atoms are provided by the cysteine/cysteine desulfurase (IscS) system. This Deinococcus geothermalis (strain DSM 11300 / CIP 105573 / AG-3a) protein is tRNA-cytidine(32) 2-sulfurtransferase.